Consider the following 474-residue polypeptide: Protein Rv3254 (474 aa).

Residues 1-4 (MTGR) constitute a propeptide that is removed on maturation.

This is Protein Rv3254 from Mycobacterium tuberculosis (strain ATCC 25618 / H37Rv).